We begin with the raw amino-acid sequence, 310 residues long: tRNA-dihydrouridine(16) synthase (310 aa).

FMN is bound by residues 7–9 (PMQ) and glutamine 68. The active-site Proton donor is cysteine 98. FMN is bound by residues lysine 139, 200–202 (NGE), and 224–225 (GR).

The protein belongs to the Dus family. DusC subfamily. It depends on FMN as a cofactor.

It carries out the reaction 5,6-dihydrouridine(16) in tRNA + NADP(+) = uridine(16) in tRNA + NADPH + H(+). The enzyme catalyses 5,6-dihydrouridine(16) in tRNA + NAD(+) = uridine(16) in tRNA + NADH + H(+). Catalyzes the synthesis of 5,6-dihydrouridine (D), a modified base found in the D-loop of most tRNAs, via the reduction of the C5-C6 double bond in target uridines. Specifically modifies U16 in tRNAs. This is tRNA-dihydrouridine(16) synthase from Haemophilus influenzae (strain ATCC 51907 / DSM 11121 / KW20 / Rd).